A 428-amino-acid polypeptide reads, in one-letter code: Protein clpf-1 (428 aa).

ATP is bound by residues E16 and R56. The segment at K99–L118 is disordered. ATP is bound at residue D124–T129.

This sequence belongs to the Clp1 family. Clp1 subfamily.

The protein localises to the nucleus. Required for endonucleolytic cleavage during polyadenylation-dependent pre-mRNA 3'-end formation. This Caenorhabditis briggsae protein is Protein clpf-1.